We begin with the raw amino-acid sequence, 221 residues long: Very-long-chain (3R)-3-hydroxyacyl-CoA dehydratase PASTICCINO 2B (221 aa).

At 1-11 (MTGVGSAVRRL) the chain is on the cytoplasmic side. Residues 12 to 32 (YLSVYNWAVFFGWAQVLYYAV) traverse the membrane as a helical segment. Residues 33–51 (TTLLESGHEAVYAAVERPL) lie on the Lumenal side of the membrane. The chain crosses the membrane as a helical span at residues 52 to 70 (QFAQTAAFLEILHGLVGLV). The Cytoplasmic portion of the chain corresponds to 71 to 76 (RSPVSA). The chain crosses the membrane as a helical span at residues 77–95 (TLPQIGSRLFLTWGILWSF). Residues 96–100 (PETHS) are Lumenal-facing. A helical transmembrane segment spans residues 101-121 (HILVTSLVISWSITEIIRYSF). Residues 122–141 (FGMKETFGFAPSWLLWLRYS) lie on the Cytoplasmic side of the membrane. Residues 142 to 165 (TFMVLYPTGISSEVGLIYIALPYM) traverse the membrane as a helical segment. Residues Tyr-147 and Glu-154 contribute to the active site. The Lumenal segment spans residues 166–184 (KATEKYCLRMPNKWNFSFD). Residues 185 to 209 (FSYASILSLAVYVPGSPHMFTYMLA) form a helical membrane-spanning segment. Over 210-221 (QRKKALAKAKAA) the chain is Cytoplasmic.

Belongs to the very long-chain fatty acids dehydratase HACD family.

The protein localises to the endoplasmic reticulum membrane. The catalysed reaction is a very-long-chain (3R)-3-hydroxyacyl-CoA = a very-long-chain (2E)-enoyl-CoA + H2O. The protein operates within lipid metabolism; fatty acid biosynthesis. Its function is as follows. Catalyzes the third of the four reactions of the long-chain fatty acids elongation cycle. This endoplasmic reticulum-bound enzymatic process, allows the addition of two carbons to the chain of long- and very long-chain fatty acids/VLCFAs per cycle. This enzyme catalyzes the dehydration of the 3-hydroxyacyl-CoA intermediate into trans-2,3-enoyl-CoA, within each cycle of fatty acid elongation. Thereby, it participates in the production of VLCFAs of different chain lengths that are involved in multiple biological processes as precursors of membrane lipids and lipid mediators. May be an anti-phosphatase that prevents CDKA-1 dephosphorylation and activation. Involved in the hormonal control of cell division and differentiation. Required for proliferation control of meristematic and non-meristematic cells. Negative regulator of the cell cycle. The sequence is that of Very-long-chain (3R)-3-hydroxyacyl-CoA dehydratase PASTICCINO 2B (PAS2B) from Oryza sativa subsp. japonica (Rice).